We begin with the raw amino-acid sequence, 632 residues long: tRNA uridine 5-carboxymethylaminomethyl modification enzyme MnmG (632 aa).

FAD-binding positions include 15 to 20, I127, and S182; that span reads GAGHAG. 276–290 is an NAD(+) binding site; it reads GPRYCPSIEDKIVRF. Q373 is an FAD binding site.

This sequence belongs to the MnmG family. As to quaternary structure, homodimer. Heterotetramer of two MnmE and two MnmG subunits. FAD serves as cofactor.

It is found in the cytoplasm. In terms of biological role, NAD-binding protein involved in the addition of a carboxymethylaminomethyl (cmnm) group at the wobble position (U34) of certain tRNAs, forming tRNA-cmnm(5)s(2)U34. This is tRNA uridine 5-carboxymethylaminomethyl modification enzyme MnmG from Streptococcus pyogenes serotype M6 (strain ATCC BAA-946 / MGAS10394).